The primary structure comprises 894 residues: Eukaryotic translation initiation factor 3 subunit C (894 aa).

2 disordered regions span residues 1–28 (MSRF…KANK) and 162–235 (SDYR…VTKM). 3 stretches are compositionally biased toward acidic residues: residues 12-22 (SDTDSSEDEVE), 169-189 (DEDG…EEVP), and 203-214 (SESESDSDDDDS). The segment covering 215 to 224 (FNWSSEPDTN) has biased composition (polar residues). Positions 625-801 (YHMHINVELM…DCLIMHRVEP (177 aa)) constitute a PCI domain. A disordered region spans residues 824–894 (QILEPRTGRG…RRHPQKPRAF (71 aa)). Over residues 845–854 (RNERQGDKQK) the composition is skewed to basic and acidic residues. Over residues 855 to 870 (GSGGFQGERRGGPGGP) the composition is skewed to gly residues. Positions 884–894 (QRRHPQKPRAF) are enriched in basic residues.

This sequence belongs to the eIF-3 subunit C family. As to quaternary structure, component of the eukaryotic translation initiation factor 3 (eIF-3) complex.

It localises to the cytoplasm. In terms of biological role, component of the eukaryotic translation initiation factor 3 (eIF-3) complex, which is involved in protein synthesis of a specialized repertoire of mRNAs and, together with other initiation factors, stimulates binding of mRNA and methionyl-tRNAi to the 40S ribosome. The eIF-3 complex specifically targets and initiates translation of a subset of mRNAs involved in cell proliferation. This Caenorhabditis briggsae protein is Eukaryotic translation initiation factor 3 subunit C.